Consider the following 274-residue polypeptide: 2-dehydro-3-deoxyphosphooctonate aldolase (274 aa).

The protein belongs to the KdsA family.

The protein resides in the cytoplasm. The catalysed reaction is D-arabinose 5-phosphate + phosphoenolpyruvate + H2O = 3-deoxy-alpha-D-manno-2-octulosonate-8-phosphate + phosphate. It participates in carbohydrate biosynthesis; 3-deoxy-D-manno-octulosonate biosynthesis; 3-deoxy-D-manno-octulosonate from D-ribulose 5-phosphate: step 2/3. The protein operates within bacterial outer membrane biogenesis; lipopolysaccharide biosynthesis. The polypeptide is 2-dehydro-3-deoxyphosphooctonate aldolase (Rickettsia rickettsii (strain Iowa)).